We begin with the raw amino-acid sequence, 64 residues long: Large ribosomal subunit protein uL29 (64 aa).

Belongs to the universal ribosomal protein uL29 family.

The sequence is that of Large ribosomal subunit protein uL29 from Cupriavidus necator (strain ATCC 17699 / DSM 428 / KCTC 22496 / NCIMB 10442 / H16 / Stanier 337) (Ralstonia eutropha).